Reading from the N-terminus, the 424-residue chain is Satellite RNA 48 kDa protein (424 aa).

The disordered stretch occupies residues 15 to 78 (TQTRPRIVPK…SNNPGRPSRK (64 aa)). 2 stretches are compositionally biased toward polar residues: residues 31-42 (RTYSRPRSSLSD) and 62-73 (NGSQGRCSNNPG).

The protein belongs to the nepovirus satellite RNA 48 kDa protein family.

The chain is Satellite RNA 48 kDa protein from Allium porrum (Leek).